A 178-amino-acid chain; its full sequence is Thymidine kinase (178 aa).

13 to 20 (GPMFAGKS) provides a ligand contact to ATP. Glu-85 functions as the Proton acceptor in the catalytic mechanism. A substrate-binding site is contributed by Phe-115. Cys-140 and Cys-143 together coordinate Zn(2+). 159–163 (IEIIG) serves as a coordination point for substrate. Residues Cys-172 and Cys-175 each coordinate Zn(2+).

The protein belongs to the thymidine kinase family.

The catalysed reaction is thymidine + ATP = dTMP + ADP + H(+). This is Thymidine kinase (TK) from Myxoma virus (strain Uriarra) (MYXV).